Consider the following 498-residue polypeptide: Type II secretion system protein E (498 aa).

Residue 261–268 (GPTGSGKS) coordinates ATP. Zn(2+) is bound by residues Cys394, Cys397, Cys425, and Cys428.

It belongs to the GSP E family. As to quaternary structure, forms homooligomers; most probably hexamers. Interacts with OutL/GspL. Zn(2+) is required as a cofactor.

The protein localises to the cell inner membrane. The enzyme catalyses ATP + H2O + cellular proteinSide 1 = ADP + phosphate + cellular proteinSide 2.. Its function is as follows. ATPase component of the type II secretion system required for the energy-dependent secretion of extracellular factors such as proteases and toxins from the periplasm. Acts as a molecular motor to provide the energy that is required for assembly of the pseudopilus and the extrusion of substrates generated in the cytoplasm. The protein is Type II secretion system protein E (outE) of Pectobacterium carotovorum subsp. carotovorum (Erwinia carotovora subsp. carotovora).